The sequence spans 276 residues: Tryptase beta-2 (276 aa).

Residues 1-21 (MLKRRLLLLWALSLLASLVYS) form the signal peptide. Positions 22–31 (APRPANQRVG) are cleaved as a propeptide — activation peptide. Residues 32–273 (IVGGHEASES…YLDWIHRYVP (242 aa)) enclose the Peptidase S1 domain. C60 and C76 are joined by a disulfide. Catalysis depends on H75, which acts as the Charge relay system. Y98 is modified (phosphotyrosine). D122 functions as the Charge relay system in the catalytic mechanism. An N-linked (GlcNAc...) asparagine glycan is attached at N133. Intrachain disulfides connect C156/C231, C189/C212, and C221/C249. The active-site Charge relay system is the S225.

It belongs to the peptidase S1 family. Tryptase subfamily. Homotetramer. The active tetramer is converted to inactive monomers at neutral and acidic pH in the absence of heparin. Low concentrations of inactive monomers become active monomers at pH 6.0 in the presence of heparin. When the concentration of active monomers is higher, they convert to active monomers and then to active tetramers. These monomers are active and functionally distinct from the tetrameric enzyme. In contrast to the hidden active sites in the tetrameric form, the active site of the monomeric form is accessible for macromolecular proteins and inhibitors, e.g. fibrinogen which is a substrate for the monomeric but not for the tetrameric form. The monomeric form forms a complex with SERPINB6. As to expression, during embryogenesis, detected primarily in skin.

The protein resides in the secreted. It catalyses the reaction Preferential cleavage: Arg-|-Xaa, Lys-|-Xaa, but with more restricted specificity than trypsin.. In terms of biological role, tryptase is the major neutral protease present in mast cells and is secreted upon the coupled activation-degranulation response of this cell type. Plays a role in innate immunity. This Mus musculus (Mouse) protein is Tryptase beta-2 (Tpsb2).